Consider the following 410-residue polypeptide: Exodeoxyribonuclease 7 large subunit (410 aa).

It belongs to the XseA family. Heterooligomer composed of large and small subunits.

Its subcellular location is the cytoplasm. It carries out the reaction Exonucleolytic cleavage in either 5'- to 3'- or 3'- to 5'-direction to yield nucleoside 5'-phosphates.. In terms of biological role, bidirectionally degrades single-stranded DNA into large acid-insoluble oligonucleotides, which are then degraded further into small acid-soluble oligonucleotides. The chain is Exodeoxyribonuclease 7 large subunit from Alkaliphilus metalliredigens (strain QYMF).